Reading from the N-terminus, the 202-residue chain is Dephospho-CoA kinase (202 aa).

The region spanning 4–201 (VIGLTGGIAS…QKYLAMSKQN (198 aa)) is the DPCK domain. 12 to 17 (ASGKTT) is a binding site for ATP.

This sequence belongs to the CoaE family.

Its subcellular location is the cytoplasm. The enzyme catalyses 3'-dephospho-CoA + ATP = ADP + CoA + H(+). Its pathway is cofactor biosynthesis; coenzyme A biosynthesis; CoA from (R)-pantothenate: step 5/5. Catalyzes the phosphorylation of the 3'-hydroxyl group of dephosphocoenzyme A to form coenzyme A. The protein is Dephospho-CoA kinase of Vibrio vulnificus (strain YJ016).